We begin with the raw amino-acid sequence, 250 residues long: Triosephosphate isomerase (250 aa).

9–11 (NWK) is a substrate binding site. His-95 acts as the Electrophile in catalysis. The active-site Proton acceptor is Glu-167. Substrate contacts are provided by residues Gly-173, Ser-213, and 234 to 235 (GG).

This sequence belongs to the triosephosphate isomerase family. In terms of assembly, homodimer.

It is found in the cytoplasm. It carries out the reaction D-glyceraldehyde 3-phosphate = dihydroxyacetone phosphate. It participates in carbohydrate biosynthesis; gluconeogenesis. The protein operates within carbohydrate degradation; glycolysis; D-glyceraldehyde 3-phosphate from glycerone phosphate: step 1/1. Its function is as follows. Involved in the gluconeogenesis. Catalyzes stereospecifically the conversion of dihydroxyacetone phosphate (DHAP) to D-glyceraldehyde-3-phosphate (G3P). The sequence is that of Triosephosphate isomerase from Herpetosiphon aurantiacus (strain ATCC 23779 / DSM 785 / 114-95).